The chain runs to 316 residues: Transcription initiation factor IIB (316 aa).

A TFIIB-type zinc finger spans residues 11-42; it reads PRVTCPNHPDAILVEDYRAGDMICPECGLVVG. The Zn(2+) site is built by C15, H18, C34, and C37. A phosphoserine mark is found at S70, S76, and S92. 2 consecutive repeat copies span residues 124 to 200 and 218 to 294. The DNA site is built by K152, R154, K189, and K196. The tract at residues 189–193 is core promoter DNA-binding; it reads KEIGR. N6-acetyllysine; by autocatalysis is present on K238. Residues 244 to 316 are necessary for TATA box-bound TBP complex formation; sequence LVPGRSPISV…DTPVDKLPQL (73 aa). DNA is bound at residue R248. Residues 249-252 are core promoter DNA-binding; sequence SPIS. DNA is bound by residues K272, A281, T284, R286, and R290. Residues 283 to 286 are core promoter DNA-binding; sequence VTIR.

The protein belongs to the TFIIB family. In terms of assembly, found in a ternary complex with TATA box-bound TBP. Part of a TFIID-containing RNA polymerase II pre-initiation complex (PIC) that is composed of TBP and at least GTF2A1, GTF2A2, GTF2E1, GTF2E2, GTF2F1, GTF2H2, GTF2H3, GTF2H4, GTF2H5, GTF2B, TCEA1, ERCC2, ERCC3, TAF1, TAF2, TAF3, TAF4, TAF5, TAF6, TAF7, TAF8, TAF9, TAF10, TAF11, TAF12 and TAF13. Associates with TFIID-TFIIA (DA complex) to form TFIID-TFIIA-TFIIB (DAB complex), which is then recognized by RNA polymerase II (Pol II). Found in a RNA polymerase II initiation complex. Interacts (via C-terminus) with TBP; this interaction with TATA box-bound TBP guides Pol II into the PIC. Interacts (via N-terminus) with Pol II. Interacts (via C-terminus) with SSU72; this interaction is inhibited by SYMPK. Interacts with NR2F1; this interaction is direct. Interacts with PGR. Interacts with ESR1. Interacts with GTF2F1 (via C-terminus and preferentially via acetylated form); this interaction prevents binding of GTF2B to GTF2F2. Interacts with GTF2F2 (via N-terminus); this interaction is inhibited in presence of GTF2F1. Interacts with the transcription elongation factor TCEA2. Interacts with HSF1 (via transactivation domain). Interacts with GPBP1. In terms of processing, acetylated. Autoacetylated; autoacetylation at Lys-238 stimulates transcription activation.

The protein resides in the nucleus. Its subcellular location is the chromosome. It carries out the reaction L-lysyl-[protein] + acetyl-CoA = N(6)-acetyl-L-lysyl-[protein] + CoA + H(+). In terms of biological role, general transcription factor that plays a role in transcription initiation by RNA polymerase II (Pol II). Involved in the pre-initiation complex (PIC) formation and Pol II recruitment at promoter DNA. Together with the TATA box-bound TBP forms the core initiation complex and provides a bridge between TBP and the Pol II-TFIIF complex. Released from the PIC early following the onset of transcription during the initiation and elongation transition and reassociates with TBP during the next transcription cycle. Associates with chromatin to core promoter-specific regions. Binds to two distinct DNA core promoter consensus sequence elements in a TBP-independent manner; these IIB-recognition elements (BREs) are localized immediately upstream (BREu), 5'-[GC][GC][GA]CGCC-3', and downstream (BREd), 5'-[GA]T[TGA][TG][GT][TG][TG]-3', of the TATA box element. Modulates transcription start site selection. Also exhibits autoacetyltransferase activity that contributes to the activated transcription. This Mus musculus (Mouse) protein is Transcription initiation factor IIB.